The chain runs to 363 residues: Zinc phosphodiesterase ELAC protein 1 (363 aa).

Zn(2+) is bound by residues histidine 62, histidine 64, aspartate 66, histidine 67, histidine 182, aspartate 253, and histidine 313. The active-site Proton acceptor is aspartate 66.

It belongs to the RNase Z family. Homodimer. It depends on Zn(2+) as a cofactor. As to expression, widely expressed. Expressed in heart, brain, placenta, lung, liver, skeletal muscle, kidney and pancreas.

It is found in the cytoplasm. It localises to the cytosol. The protein localises to the nucleus. The catalysed reaction is Endonucleolytic cleavage of RNA, removing extra 3' nucleotides from tRNA precursor, generating 3' termini of tRNAs. A 3'-hydroxy group is left at the tRNA terminus and a 5'-phosphoryl group is left at the trailer molecule.. Zinc phosphodiesterase, which displays some tRNA 3'-processing endonuclease activity. Specifically involved in tRNA repair: acts downstream of the ribosome-associated quality control (RQC) pathway by removing a 2',3'-cyclic phosphate from tRNAs following cleavage by ANKZF1. tRNAs are then processed by TRNT1. The sequence is that of Zinc phosphodiesterase ELAC protein 1 from Homo sapiens (Human).